We begin with the raw amino-acid sequence, 318 residues long: Acetyl-coenzyme A carboxylase carboxyl transferase subunit alpha (318 aa).

The CoA carboxyltransferase C-terminal domain occupies 38–292 (KLEKRLAKLE…NKTITKSLHA (255 aa)).

It belongs to the AccA family. Acetyl-CoA carboxylase is a heterohexamer composed of biotin carboxyl carrier protein (AccB), biotin carboxylase (AccC) and two subunits each of ACCase subunit alpha (AccA) and ACCase subunit beta (AccD).

It is found in the cytoplasm. It catalyses the reaction N(6)-carboxybiotinyl-L-lysyl-[protein] + acetyl-CoA = N(6)-biotinyl-L-lysyl-[protein] + malonyl-CoA. Its pathway is lipid metabolism; malonyl-CoA biosynthesis; malonyl-CoA from acetyl-CoA: step 1/1. In terms of biological role, component of the acetyl coenzyme A carboxylase (ACC) complex. First, biotin carboxylase catalyzes the carboxylation of biotin on its carrier protein (BCCP) and then the CO(2) group is transferred by the carboxyltransferase to acetyl-CoA to form malonyl-CoA. This chain is Acetyl-coenzyme A carboxylase carboxyl transferase subunit alpha, found in Listeria monocytogenes serovar 1/2a (strain ATCC BAA-679 / EGD-e).